The chain runs to 443 residues: Deoxyguanosinetriphosphate triphosphohydrolase-like protein (443 aa).

Positions 61-246 (RLTHSLEVAC…MEAADDICYG (186 aa)) constitute an HD domain.

It belongs to the dGTPase family. Type 3 subfamily.

This chain is Deoxyguanosinetriphosphate triphosphohydrolase-like protein, found in Pseudomonas aeruginosa (strain LESB58).